The sequence spans 352 residues: Putative [LysW]-L-2-aminoadipate/[LysW]-L-glutamate phosphate reductase (352 aa).

Residues 10–13 (SGFT) and 34–36 (SRR) contribute to the NADP(+) site. Residue C151 is part of the active site. N319 provides a ligand contact to NADP(+).

The protein belongs to the NAGSA dehydrogenase family. Type 1 subfamily. LysY sub-subfamily.

It is found in the cytoplasm. The enzyme catalyses [amino-group carrier protein]-C-terminal-N-(1-carboxy-5-oxopentan-1-yl)-L-glutamine + phosphate + NADP(+) = [amino-group carrier protein]-C-terminal-N-(1-carboxy-5-phosphooxy-5-oxopentan-1-yl)-L-glutamine + NADPH + H(+). It catalyses the reaction [amino-group carrier protein]-C-terminal-gamma-(L-glutamyl-5-semialdehyde)-L-glutamate + phosphate + NADP(+) = [amino-group carrier protein]-C-terminal-gamma-(5-phospho-L-glutamyl)-L-glutamate + NADPH + H(+). It functions in the pathway amino-acid biosynthesis; L-lysine biosynthesis via AAA pathway; L-lysine from L-alpha-aminoadipate (Thermus route): step 3/5. The protein operates within amino-acid biosynthesis; L-arginine biosynthesis. Functionally, involved in both the arginine and lysine biosynthetic pathways. This Pyrobaculum islandicum (strain DSM 4184 / JCM 9189 / GEO3) protein is Putative [LysW]-L-2-aminoadipate/[LysW]-L-glutamate phosphate reductase.